A 503-amino-acid polypeptide reads, in one-letter code: Glycoprotein 3-alpha-L-fucosyltransferase A (503 aa).

The Cytoplasmic portion of the chain corresponds to 1 to 10 (MRRPKISLKK). The helical; Signal-anchor for type II membrane protein transmembrane segment at 11–28 (YFYLTLICALLLIFGFSL) threads the bilayer. At 29-503 (KEREIWKTLS…KDVISDSSDD (475 aa)) the chain is on the lumenal side. The disordered stretch occupies residues 44 to 71 (ITTQQQQHQHLHQLQSMDEEHPMATSST). Positions 47–58 (QQQQHQHLHQLQ) are enriched in low complexity. N-linked (GlcNAc...) asparagine glycosylation is found at asparagine 262, asparagine 295, and asparagine 299.

This sequence belongs to the glycosyltransferase 10 family. Mn(2+) is required as a cofactor.

The protein resides in the golgi apparatus. It localises to the golgi stack membrane. It carries out the reaction N(4)-{beta-D-GlcNAc-(1-&gt;2)-alpha-D-Man-(1-&gt;3)-[beta-D-GlcNAc-(1-&gt;2)-alpha-D-Man-(1-&gt;6)]-beta-D-Man-(1-&gt;4)-beta-D-GlcNAc-(1-&gt;4)-beta-D-GlcNAc}-L-asparaginyl-[protein] + GDP-beta-L-fucose = N(4)-{beta-D-GlcNAc-(1-&gt;2)-alpha-D-Man-(1-&gt;3)-[beta-D-GlcNAc-(1-&gt;2)-alpha-D-Man-(1-&gt;6)]-beta-D-Man-(1-&gt;4)-beta-D-GlcNAc-(1-&gt;4)-[alpha-L-Fuc(1-&gt;3)]-beta-D-GlcNAc}-L-asparaginyl-[protein] + GDP + H(+). It functions in the pathway protein modification; protein glycosylation. Its function is as follows. Catalyzes alpha-1,3 glycosidic linkages of N-glycans. Plays a role in neuronal development by promoting ventral nerve cord formation, possibly by promoting interactions between migrating cells and the extracellular matrix or by promoting neural activity. The polypeptide is Glycoprotein 3-alpha-L-fucosyltransferase A (FucTA) (Drosophila melanogaster (Fruit fly)).